The primary structure comprises 147 residues: Endoribonuclease YbeY (147 aa).

Zn(2+)-binding residues include His109, His113, and His119.

It belongs to the endoribonuclease YbeY family. Zn(2+) is required as a cofactor.

It is found in the cytoplasm. Single strand-specific metallo-endoribonuclease involved in late-stage 70S ribosome quality control and in maturation of the 3' terminus of the 16S rRNA. This chain is Endoribonuclease YbeY, found in Thiobacillus denitrificans (strain ATCC 25259 / T1).